A 1500-amino-acid polypeptide reads, in one-letter code: MDPSMGVNSVTISVEGMTCNSCVWTIEQQIGKVNGVHHIKVSLEEKNATIIYDPKLQTPKTLQEAIDDMGFDAVIHNPDPLPVLTDTLFLTVTASLTLPWDHIQSTLLKTKGVTDIKIYPQKRTVAVTIIPSIVNANQIKELVPELSLDTGTLEKKSGACEDHSMAQAGEVVLKMKVEGMTCHSCTSTIEGKIGKLQGVQRIKVSLDNQEATIVYQPHLISVEEMKKQIEAMGFPAFVKKQPKYLKLGAIDVERLKNTPVKSSEGSQQRSPSYTNDSTATFIIDGMHCKSCVSNIESTLSALQYVSSIVVSLENRSAIVKYNASSVTPESLRKAIEAVSPGLYRVSITSEVESTSNSPSSSSLQKIPLNVVSQPLTQETVINIDGMTCNSCVQSIEGVISKKPGVKSIRVSLANSNGTVEYDPLLTSPETLRGAIEDMGFDATLSDTNEPLVVIAQPSSEMPLLTSTNEFYTKGMTPVQDKEEGKNSSKCYIQVTGMTCASCVANIERNLRREEGIYSILVALMAGKAEVRYNPAVIQPPMIAEFIRELGFGATVIENADEGDGVLELVVRGMTCASCVHKIESSLTKHRGILYCSVALATNKAHIKYDPEIIGPRDIIHTIESLGFEASLVKKDRSASHLDHKREIRQWRRSFLVSLFFCIPVMGLMIYMMVMDHHFATLHHNQNMSKEEMINLHSSMFLERQILPGLSVMNLLSFLLCVPVQFFGGWYFYIQAYKALKHKTANMDVLIVLATTIAFAYSLIILLVAMYERAKVNPITFFDTPPMLFVFIALGRWLEHIAKGKTSEALAKLISLQATEATIVTLDSDNILLSEEQVDVELVQRGDIIKVVPGGKFPVDGRVIEGHSMVDESLITGEAMPVAKKPGSTVIAGSINQNGSLLICATHVGADTTLSQIVKLVEEAQTSKAPIQQFADKLSGYFVPFIVFVSIATLLVWIVIGFLNFEIVETYFPGYNRSISRTETIIRFAFQASITVLCIACPCSLGLATPTAVMVGTGVGAQNGILIKGGEPLEMAHKVKVVVFDKTGTITHGTPVVNQVKVLTESNRISHHKILAIVGTAESNSEHPLGTAITKYCKQELDTETLGTCIDFQVVPGCGISCKVTNIEGLLHKNNWNIEDNNIKNASLVQIDASNEQSSTSSSMIIDAQISNALNAQQYKVLIGNREWMIRNGLVINNDVNDFMTEHERKGRTAVLVAVDDELCGLIAIADTVKPEAELAIHILKSMGLEVVLMTGDNSKTARSIASQVGITKVFAEVLPSHKVAKVKQLQEEGKRVAMVGDGINDSPALAMANVGIAIGTGTDVAIEAADVVLIRNDLLDVVASIDLSRKTVKRIRINFVFALIYNLVGIPIAAGVFMPIGLVLQPWMGSAAMAASSVSVVLSSLFLKLYRKPTYESYELPARSQIGQKSPSEISVHVGIDDTSRNSPKLGLLDRIVNYSRASINSLLSDKRSLNSVVTSEPDKHSLLVGDFREDDDTAL.

The Cytoplasmic segment spans residues 1-653 (MDPSMGVNSV…KREIRQWRRS (653 aa)). HMA domains lie at 8–74 (NSVT…FDAV) and 85–151 (TDTL…LDTG). The Cu(+) site is built by Thr-18, Cys-19, and Cys-22. The residue at position 152 (Thr-152) is a Phosphothreonine. Residues 171–237 (VVLKMKVEGM…QIEAMGFPAF (67 aa)) enclose the HMA 3 domain. Residues Cys-182 and Cys-185 each coordinate Cu(+). Position 270 is a phosphoserine (Ser-270). Positions 277–343 (STATFIIDGM…AIEAVSPGLY (67 aa)) constitute an HMA 4 domain. The Cu(+) site is built by Cys-288 and Cys-291. The residue at position 327 (Thr-327) is a Phosphothreonine. 4 positions are modified to phosphoserine: Ser-339, Ser-353, Ser-357, and Ser-362. HMA domains follow at residues 377–443 (QETV…FDAT), 488–554 (SKCY…FGAT), and 564–630 (GVLE…FEAS). Positions 388, 391, 499, 502, 575, and 578 each coordinate Cu(+). Residues 654–675 (FLVSLFFCIPVMGLMIYMMVMD) traverse the membrane as a helical segment. Topologically, residues 676–714 (HHFATLHHNQNMSKEEMINLHSSMFLERQILPGLSVMNL) are extracellular. Asn-686 carries an N-linked (GlcNAc...) asparagine glycan. The chain crosses the membrane as a helical span at residues 715-734 (LSFLLCVPVQFFGGWYFYIQ). Residues 735 to 741 (AYKALKH) are Cytoplasmic-facing. Residues 742–762 (KTANMDVLIVLATTIAFAYSL) traverse the membrane as a helical segment. The Extracellular portion of the chain corresponds to 763 to 781 (IILLVAMYERAKVNPITFF). Residues 782-802 (DTPPMLFVFIALGRWLEHIAK) traverse the membrane as a helical segment. The Cytoplasmic portion of the chain corresponds to 803 to 936 (GKTSEALAKL…KAPIQQFADK (134 aa)). Residues 937 to 959 (LSGYFVPFIVFVSIATLLVWIVI) traverse the membrane as a helical segment. The Extracellular segment spans residues 960–989 (GFLNFEIVETYFPGYNRSISRTETIIRFAF). The N-linked (GlcNAc...) asparagine glycan is linked to Asn-975. The chain crosses the membrane as a helical span at residues 990 to 1011 (QASITVLCIACPCSLGLATPTA). Over 1012-1356 (VMVGTGVGAQ…LSRKTVKRIR (345 aa)) the chain is Cytoplasmic. Residue Asp-1044 is the 4-aspartylphosphate intermediate of the active site. Glu-1081 is a binding site for ATP. Thr-1212 carries the post-translational modification Phosphothreonine. Asp-1301 and Asp-1305 together coordinate Mg(2+). Residues 1357–1374 (INFVFALIYNLVGIPIAA) form a helical membrane-spanning segment. Residues 1375–1385 (GVFMPIGLVLQ) are Extracellular-facing. The chain crosses the membrane as a helical span at residues 1386-1405 (PWMGSAAMAASSVSVVLSSL). The Cytoplasmic portion of the chain corresponds to 1406-1500 (FLKLYRKPTY…DFREDDDTAL (95 aa)). 5 positions are modified to phosphoserine: Ser-1430, Ser-1432, Ser-1460, Ser-1463, and Ser-1466. Positions 1467-1468 (LL) match the Endocytosis signal motif. Ser-1469, Ser-1473, Ser-1476, and Ser-1486 each carry phosphoserine. Residues 1486–1500 (SLLVGDFREDDDTAL) form a PDZD11-binding region. Residues 1487–1488 (LL) carry the Endocytosis signal motif.

This sequence belongs to the cation transport ATPase (P-type) (TC 3.A.3) family. Type IB subfamily. Monomer. Interacts with PDZD11. Interacts with ATOX1 and COMMD1. Interacts with TYRP1. Directly interacts with SOD3; this interaction is copper-dependent and is required for SOD3 activity. Widely expressed including in heart, brain, lung, muscle, kidney, pancreas, and to a lesser extent placenta. Expressed in fibroblasts, aortic smooth muscle cells, aortic endothelial cells and umbilical vein endothelial cells (at protein level). As to expression, expressed in cerebellum and brain cortex.

The protein localises to the golgi apparatus. It is found in the trans-Golgi network membrane. The protein resides in the cell membrane. It localises to the melanosome membrane. Its subcellular location is the early endosome membrane. The protein localises to the cell projection. It is found in the axon. The protein resides in the dendrite. It localises to the postsynaptic density. Its subcellular location is the cytoplasm. The protein localises to the cytosol. It is found in the endoplasmic reticulum. It carries out the reaction Cu(+)(in) + ATP + H2O = Cu(+)(out) + ADP + phosphate + H(+). ATP-driven copper (Cu(+)) ion pump that plays an important role in intracellular copper ion homeostasis. Within a catalytic cycle, acquires Cu(+) ion from donor protein on the cytoplasmic side of the membrane and delivers it to acceptor protein on the lumenal side. The transfer of Cu(+) ion across the membrane is coupled to ATP hydrolysis and is associated with a transient phosphorylation that shifts the pump conformation from inward-facing to outward-facing state. Under physiological conditions, at low cytosolic copper concentration, it is localized at the trans-Golgi network (TGN) where it transfers Cu(+) ions to cuproenzymes of the secretory pathway. Upon elevated cytosolic copper concentrations, it relocalizes to the plasma membrane where it is responsible for the export of excess Cu(+) ions. May play a dual role in neuron function and survival by regulating cooper efflux and neuronal transmission at the synapse as well as by supplying Cu(+) ions to enzymes such as PAM, TYR and SOD3. In the melanosomes of pigmented cells, provides copper cofactor to TYR to form an active TYR holoenzyme for melanin biosynthesis. The sequence is that of Copper-transporting ATPase 1 from Homo sapiens (Human).